The chain runs to 543 residues: Nucleoside-triphosphatase ntp-1 (543 aa).

A helical membrane pass occupies residues 40 to 60 (VYGFLLTCTCLLLILTIIPMS). Glu-212 (proton acceptor) is an active-site residue. The helical transmembrane segment at 497 to 517 (QISNFFSFFVILIIVLAVALY) threads the bilayer.

This sequence belongs to the GDA1/CD39 NTPase family.

It localises to the golgi apparatus membrane. The catalysed reaction is a ribonucleoside 5'-triphosphate + H2O = a ribonucleoside 5'-diphosphate + phosphate + H(+). Its function is as follows. Seems to be able to hydrolyze CTP, ATP and UTP. In Caenorhabditis elegans, this protein is Nucleoside-triphosphatase ntp-1.